A 233-amino-acid polypeptide reads, in one-letter code: MEGQRWLPLEANPEVTNQFLKQLGLHPNWQFVDVYGMESELLSIIPRPVCAVLLLFPITEKYEVFRTEEEEKIKSQGQDVTSSVYFMKQTISNACGTIGTIGLIHAIANNKDKVHFESGSTLKKFLEESVSMSPEERAKYLENYDAIRVTHETSAHEGQTEAPSIDEKVDLHFIALVHVDGHLYELDGWKPFPINHGKTSDETLLEDVIKVCKKFMERDPDELRFNAIALSAA.

The UCH catalytic domain occupies 5-232 (RWLPLEANPE…LRFNAIALSA (228 aa)). Positions 8–13 (PLEANP) are interaction with ubiquitin. C95 functions as the Nucleophile in the catalytic mechanism. S133 carries the phosphoserine modification. The active-site Proton donor is the H172. An interaction with ubiquitin region spans residues 222 to 227 (ELRFNA).

Belongs to the peptidase C12 family. As to expression, expressed in various tissues at low level.

The protein localises to the cytoplasm. The enzyme catalyses Thiol-dependent hydrolysis of ester, thioester, amide, peptide and isopeptide bonds formed by the C-terminal Gly of ubiquitin (a 76-residue protein attached to proteins as an intracellular targeting signal).. In terms of biological role, ubiquitin-protein hydrolase is involved both in the processing of ubiquitin precursors and of ubiquitinated proteins. This enzyme is a thiol protease that recognizes and hydrolyzes a peptide bond at the C-terminal glycine of ubiquitin. The sequence is that of Ubiquitin carboxyl-terminal hydrolase isozyme L4 (Uchl4) from Mus musculus (Mouse).